A 317-amino-acid polypeptide reads, in one-letter code: Methionyl-tRNA formyltransferase (317 aa).

112 to 115 (SLLP) contacts (6S)-5,6,7,8-tetrahydrofolate.

Belongs to the Fmt family.

The catalysed reaction is L-methionyl-tRNA(fMet) + (6R)-10-formyltetrahydrofolate = N-formyl-L-methionyl-tRNA(fMet) + (6S)-5,6,7,8-tetrahydrofolate + H(+). In terms of biological role, attaches a formyl group to the free amino group of methionyl-tRNA(fMet). The formyl group appears to play a dual role in the initiator identity of N-formylmethionyl-tRNA by promoting its recognition by IF2 and preventing the misappropriation of this tRNA by the elongation apparatus. This chain is Methionyl-tRNA formyltransferase, found in Mycoplasma capricolum subsp. capricolum (strain California kid / ATCC 27343 / NCTC 10154).